The primary structure comprises 374 residues: ATPase ASNA1 homolog (374 aa).

An ATP-binding site is contributed by Lys-44 to Thr-51. Asp-73 is an active-site residue. Positions 244 and 271 each coordinate ATP.

Belongs to the arsA ATPase family. In terms of assembly, homodimer.

The protein localises to the cytoplasm. Its subcellular location is the endoplasmic reticulum. Functionally, ATPase required for the post-translational delivery of tail-anchored (TA) proteins to the endoplasmic reticulum. Recognizes and selectively binds the transmembrane domain of TA proteins in the cytosol. This complex then targets to the endoplasmic reticulum by membrane-bound receptors, where the tail-anchored protein is released for insertion. This process is regulated by ATP binding and hydrolysis. ATP binding drives the homodimer towards the closed dimer state, facilitating recognition of newly synthesized TA membrane proteins. ATP hydrolysis is required for insertion. Subsequently, the homodimer reverts towards the open dimer state, lowering its affinity for the membrane-bound receptor, and returning it to the cytosol to initiate a new round of targeting. The chain is ATPase ASNA1 homolog from Plasmodium vivax (strain Salvador I).